The chain runs to 217 residues: Outer-membrane lipoprotein LolB (217 aa).

A signal peptide spans Met-1–Ala-20. Residue Cys-21 is the site of N-palmitoyl cysteine attachment. The S-diacylglycerol cysteine moiety is linked to residue Cys-21. Residues Asp-105–Pro-124 form a disordered region.

The protein belongs to the LolB family. In terms of assembly, monomer.

The protein resides in the cell outer membrane. Plays a critical role in the incorporation of lipoproteins in the outer membrane after they are released by the LolA protein. This is Outer-membrane lipoprotein LolB from Xanthomonas axonopodis pv. citri (strain 306).